Here is a 349-residue protein sequence, read N- to C-terminus: MKTIQGQSATTALTMEVARVQAISSITKCMDTIPSEYIRSENEQPAATTLQGVVLEVPVIDISNVDDDEEKLVKEIVEASKEWGIFQVINHGIPDEVIENLQKVGKEFFEEVPQEEKELIAKKPGAQSLEGYGTSLQKEIEGKKGWVDHLFHKIWPPSAINYRYWPKNPPSYREANEEYAKWLRKVADGIFRSLSLGLGLEGHEMMEAAGSEDIVYMLKINYYPPCPRPDLALGVVAHTDMSYITLLVPNEVQVFKDGHWYDVNYIPNAIIVHIGDQVEILSNGKYKSVYHRTTVNKYKTRMSWPVFLEPSSEHEVGPIPNLINEANPPKFKTKKYKDYVYCKLNKLPQ.

Positions 213-310 (DIVYMLKINY…RMSWPVFLEP (98 aa)) constitute a Fe2OG dioxygenase domain. Positions 238, 240, and 291 each coordinate Fe cation.

Belongs to the iron/ascorbate-dependent oxidoreductase family. It depends on Fe cation as a cofactor. L-ascorbate is required as a cofactor.

It is found in the cytoplasm. It catalyses the reaction a (2R,3R)-dihydroflavonol + 2-oxoglutarate + O2 = a flavonol + succinate + CO2 + H2O. The enzyme catalyses a (2S)-flavan-4-one + 2-oxoglutarate + O2 = a (2R,3R)-dihydroflavonol + succinate + CO2. The protein operates within secondary metabolite biosynthesis; flavonoid biosynthesis. Functionally, catalyzes the formation of flavonols from dihydroflavonols. It can act on dihydrokaempferol to produce kaempferol, on dihydroquercetin to produce quercitin and on dihydromyricetin to produce myricetin. The protein is Flavonol synthase/flavanone 3-hydroxylase of Solanum tuberosum (Potato).